The primary structure comprises 106 residues: Large ribosomal subunit protein bL21 (106 aa).

This sequence belongs to the bacterial ribosomal protein bL21 family. Part of the 50S ribosomal subunit. Contacts protein L20.

This protein binds to 23S rRNA in the presence of protein L20. This chain is Large ribosomal subunit protein bL21, found in Syntrophobacter fumaroxidans (strain DSM 10017 / MPOB).